Reading from the N-terminus, the 862-residue chain is Glucans biosynthesis glucosyltransferase H (862 aa).

Residues 1–25 form a disordered region; it reads MELPATSGLNAQPGNAEGTTASTRP. Polar residues predominate over residues 7–25; the sequence is SGLNAQPGNAEGTTASTRP. 5 helical membrane-spanning segments follow: residues 188 to 210, 545 to 567, 597 to 619, 626 to 648, and 708 to 730; these read RLTLLALMIAQTVAATWAMSSVL, GVMAYLSAPLWFLFLLLSTALLA, ALFSATATVLFLPKILSVLVLWA, GGAVHLALSMVIEAVFSVLAAPV, and FLWWLSPVVGALIVSILLSVFSS.

This sequence belongs to the glycosyltransferase 2 family. OpgH subfamily.

It is found in the cell inner membrane. It participates in glycan metabolism; osmoregulated periplasmic glucan (OPG) biosynthesis. Functionally, involved in the biosynthesis of osmoregulated periplasmic glucans (OPGs). The sequence is that of Glucans biosynthesis glucosyltransferase H from Ralstonia nicotianae (strain ATCC BAA-1114 / GMI1000) (Ralstonia solanacearum).